Reading from the N-terminus, the 467-residue chain is ASVGFKAGVKDYRLTYYTPEYQTKDTDILAAFRVTPQPGVPPEEAGAAVAAESSTGTWTTVWTDGLTSLDRYKGRCYDIEPVPGEETQFIAYVAYPLDLFEEGSVTNLFTSIVGNVFGFKALRALRLEDLRIPPAYSKTFQGPPHGIQVERDKLNKYGRPLLGCTIKPKLGLSAKNYGRAVYECLRGGLDFTKDDENVNSQPFMRWRDRFVFCAEAIYKAQAETGEIKGHYLNATAGTCEEMMKRAVFARELGVPIIMHDYLTGGFTANTSLAHYCRDNGLLLHIHRAMHAVIDRQRIHGMHFRVLAKALRMSGGDHIHAGTVVGKLEGERDVTLGFVDLLRDDFIEKDRSRGIYFTQDWVSMPGVLPVASGGIHVWHMPALTEIFGDDSVLQFGGGTLGHPWGNAPGAVANRVALEACVQARNEGRDLAREGNEVIREASKWSPELAAACEVWKEIKFEFEAIDVL.

Residue lysine 6 is modified to N6,N6,N6-trimethyllysine. Residues asparagine 115 and threonine 165 each contribute to the substrate site. The Proton acceptor role is filled by lysine 167. Lysine 169 is a substrate binding site. Mg(2+) contacts are provided by lysine 193, aspartate 195, and glutamate 196. N6-carboxylysine is present on lysine 193. Histidine 286 (proton acceptor) is an active-site residue. Substrate-binding residues include arginine 287, histidine 319, and serine 371.

This sequence belongs to the RuBisCO large chain family. Type I subfamily. In terms of assembly, heterohexadecamer of 8 large chains and 8 small chains; disulfide-linked. The disulfide link is formed within the large subunit homodimers. The cofactor is Mg(2+). The disulfide bond which can form in the large chain dimeric partners within the hexadecamer appears to be associated with oxidative stress and protein turnover.

It is found in the plastid. It localises to the chloroplast. It carries out the reaction 2 (2R)-3-phosphoglycerate + 2 H(+) = D-ribulose 1,5-bisphosphate + CO2 + H2O. The catalysed reaction is D-ribulose 1,5-bisphosphate + O2 = 2-phosphoglycolate + (2R)-3-phosphoglycerate + 2 H(+). Its function is as follows. RuBisCO catalyzes two reactions: the carboxylation of D-ribulose 1,5-bisphosphate, the primary event in carbon dioxide fixation, as well as the oxidative fragmentation of the pentose substrate in the photorespiration process. Both reactions occur simultaneously and in competition at the same active site. In Cedrus atlantica (Atlas cedar), this protein is Ribulose bisphosphate carboxylase large chain.